A 259-amino-acid chain; its full sequence is Hydroxyethylthiazole kinase 1 (259 aa).

A substrate-binding site is contributed by Met-38. Positions 113 and 158 each coordinate ATP. Residue Gly-185 participates in substrate binding.

It belongs to the Thz kinase family. Mg(2+) serves as cofactor.

It carries out the reaction 5-(2-hydroxyethyl)-4-methylthiazole + ATP = 4-methyl-5-(2-phosphooxyethyl)-thiazole + ADP + H(+). The protein operates within cofactor biosynthesis; thiamine diphosphate biosynthesis; 4-methyl-5-(2-phosphoethyl)-thiazole from 5-(2-hydroxyethyl)-4-methylthiazole: step 1/1. In terms of biological role, catalyzes the phosphorylation of the hydroxyl group of 4-methyl-5-beta-hydroxyethylthiazole (THZ). This Leuconostoc mesenteroides subsp. mesenteroides (strain ATCC 8293 / DSM 20343 / BCRC 11652 / CCM 1803 / JCM 6124 / NCDO 523 / NBRC 100496 / NCIMB 8023 / NCTC 12954 / NRRL B-1118 / 37Y) protein is Hydroxyethylthiazole kinase 1.